Consider the following 504-residue polypeptide: L-carnitine/gamma-butyrobetaine antiporter (504 aa).

A run of 12 helical transmembrane segments spans residues 10–30 (IEPKVFFPPLIIVGILCWLTV), 51–71 (WGWAFEWYMVVMLFGWFWLVF), 92–112 (IFMMFASCTSAAVLFWGSIEI), 143–163 (GPLPWATYSFLSVAFAYFFFV), 195–215 (FYLVALIFAMGTSLGLATPLV), 231–251 (LDAIIITCWIILNAICVACGL), 263–283 (SYLSFLMLGWVFIVSGASFIM), 316–336 (WTVFYWAWWVIYAIQMSIFLA), 347–367 (LCFGMVLGLTASTWILWTVLG), 398–418 (WAALPLSTATMWGFFILCFIA), 446–466 (LLVRIGWSILVGIIGIVLLAL), and 475–495 (AIIAGGCPLFFVNIMVTLSFI).

Belongs to the BCCT transporter (TC 2.A.15) family. CaiT subfamily. Homotrimer.

It localises to the cell inner membrane. The catalysed reaction is 4-(trimethylamino)butanoate(in) + (R)-carnitine(out) = 4-(trimethylamino)butanoate(out) + (R)-carnitine(in). The protein operates within amine and polyamine metabolism; carnitine metabolism. Catalyzes the exchange of L-carnitine for gamma-butyrobetaine. This chain is L-carnitine/gamma-butyrobetaine antiporter, found in Escherichia coli (strain K12 / MC4100 / BW2952).